We begin with the raw amino-acid sequence, 150 residues long: Putative F-box protein At2g33655 (150 aa).

Positions 1–47 (MEKMSDLPRELVEEILSRVPVKSMREVRVTCKTWNALSKHISKAEAA) constitute an F-box domain.

The sequence is that of Putative F-box protein At2g33655 from Arabidopsis thaliana (Mouse-ear cress).